A 155-amino-acid polypeptide reads, in one-letter code: Large ribosomal subunit protein uL13 (155 aa).

It belongs to the universal ribosomal protein uL13 family. In terms of assembly, part of the 50S ribosomal subunit.

Functionally, this protein is one of the early assembly proteins of the 50S ribosomal subunit, although it is not seen to bind rRNA by itself. It is important during the early stages of 50S assembly. This Rickettsia akari (strain Hartford) protein is Large ribosomal subunit protein uL13.